The primary structure comprises 133 residues: Complexin-1 (133 aa).

Disordered stretches follow at residues 1–40 (MDFV…RLEA) and 85–112 (AMEA…DEEE). The segment covering 15 to 40 (DMGKMLGGDEEKDPDAEKKEEERLEA) has biased composition (basic and acidic residues). A coiled-coil region spans residues 28–60 (PDAEKKEEERLEALRQAEEERAGKYAKMEAERE).

Belongs to the complexin/synaphin family. As to quaternary structure, binds to the SNARE core complex containing SNAP25, VAMP2 and syntaxin-1. In terms of tissue distribution, nervous system. Present in electric organ (at protein level).

It is found in the cytoplasm. Its subcellular location is the cytosol. Positively regulates a late step in synaptic vesicle exocytosis. The polypeptide is Complexin-1 (Narke japonica (Japanese sleeper ray)).